The primary structure comprises 320 residues: Putative thiosulfate sulfurtransferase (320 aa).

The signal sequence occupies residues 1–37 (MSVRSLRWPRQKAFLAVISLVVAVLLAVPGWLTPATA). Rhodanese domains follow at residues 56 to 166 (NNKQ…PVTK) and 194 to 315 (LTGK…PVET). Cys274 functions as the Cysteine persulfide intermediate in the catalytic mechanism.

The protein localises to the periplasm. The catalysed reaction is thiosulfate + hydrogen cyanide = thiocyanate + sulfite + 2 H(+). In terms of biological role, may be a sulfotransferase involved in the transport of sulfate. Displays very low rhodanese activity. The protein is Putative thiosulfate sulfurtransferase (rhdA) of Synechococcus elongatus (strain ATCC 33912 / PCC 7942 / FACHB-805) (Anacystis nidulans R2).